We begin with the raw amino-acid sequence, 468 residues long: RuvB-like helicase 2 (468 aa).

Position 76-83 (76-83 (GPPSTGKT)) interacts with ATP.

This sequence belongs to the RuvB family. In terms of assembly, may form heterododecamers with RVB1. Component of the SWR1 chromatin remodeling complex, the INO80 chromatin remodeling complex, and of the R2TP complex.

The protein localises to the nucleus. The enzyme catalyses ATP + H2O = ADP + phosphate + H(+). Functionally, DNA helicase which participates in several chromatin remodeling complexes, including the SWR1 and the INO80 complexes. The SWR1 complex mediates the ATP-dependent exchange of histone H2A for the H2A variant HZT1 leading to transcriptional regulation of selected genes by chromatin remodeling. The INO80 complex remodels chromatin by shifting nucleosomes and is involved in DNA repair. Also involved in pre-rRNA processing. The protein is RuvB-like helicase 2 (rvb2) of Emericella nidulans (strain FGSC A4 / ATCC 38163 / CBS 112.46 / NRRL 194 / M139) (Aspergillus nidulans).